Here is a 672-residue protein sequence, read N- to C-terminus: Protein OS-9 (672 aa).

An N-terminal signal peptide occupies residues 1–26; the sequence is MAAEVLLSSLLGLLFLGLLLPARLTG. Residues 108 to 230 enclose the MRH domain; the sequence is APCLLKTKDW…TIRTSRLCPH (123 aa). A disulfide bond links Cys-110 and Cys-123. A mannooligosaccharide derivative contacts are provided by Trp-117, Trp-118, and Gln-130. Asn-177 carries N-linked (GlcNAc...) asparagine glycosylation. Disulfide bonds link Cys-181–Cys-216 and Cys-196–Cys-228. Asp-182, Arg-188, Glu-212, and Tyr-218 together coordinate a mannooligosaccharide derivative. Disordered regions lie at residues 261-355, 372-452, 511-548, and 637-672; these read RQAE…NVQV, KAAE…LLPS, ENQS…RVRV, and EANK…EFDF. 5 stretches are compositionally biased toward basic and acidic residues: residues 263 to 281, 294 to 310, 320 to 338, 372 to 386, and 394 to 409; these read AESK…DTDR, PKKE…ESEL, AAAR…HEAA, KAAE…REQP, and PQRE…KDGE. The span at 414 to 435 shows a compositional bias: acidic residues; the sequence is MEEEDGDDEEEEEEEEEDEEEQ. The span at 637–652 shows a compositional bias: basic and acidic residues; that stretch reads EANKERQRQSELESNY. Acidic residues predominate over residues 663–672; sequence DTGDLDEFDF.

The protein belongs to the OS-9 family. Component of the HRD1 complex, which comprises at least SYNV1/HRD1, DERL1/2, FAM8A1, HERPUD1/HERP, OS9, SEL1L and UBE2J1. FAM8A1 is stabilized by interaction with SYNV1, which prevents its proteasomal degradation. OS9 and UBE2J1 recruitment to the complex may be mediated by SEL1L. Through this complex, may interact with ERLEC1 and HSPA5. Interacts (via C-terminus) with CPNE6 (via second C2 domain); this interaction occurs in a calcium-dependent manner in vitro. Interacts with CREB3. In terms of processing, N-glycosylated. Post-translationally, intramolecular disulfide bonds.

The protein localises to the endoplasmic reticulum lumen. Functionally, lectin component of the HRD1 complex, which functions in endoplasmic reticulum (ER) quality control and ER-associated degradation (ERAD). Specifically recognizes and binds improperly folded glycoproteins as well as hyperglycosylated proteins, retain them in the ER, and transfers them to the ubiquitination machinery and promote their degradation. Possible targets include TRPV4 as well as hyperglycosylated HSP90B1. This is Protein OS-9 (Os9) from Mus musculus (Mouse).